The following is a 457-amino-acid chain: Chromogranin-A (457 aa).

The first 18 residues, 1–18, serve as a signal peptide directing secretion; that stretch reads MRSAAVLALLLCAGQVTA. A disulfide bridge links Cys-35 with Cys-56. The O-glycosylated at one site only in cerebrospinal fluid stretch occupies residues 41 to 59; it reads SDTLSKPSPMPVSQECFET. The disordered stretch occupies residues 88-440; sequence KERAHQQKKH…DQELESLSAI (353 aa). Over residues 116 to 144 the composition is skewed to basic and acidic residues; the sequence is ELKEAVEEPSSKDVMEKREDSKEAEKSGE. Ser-142 carries the phosphoserine modification. Residues 171–180 are compositionally biased toward acidic residues; sequence GEEEEEEEEA. Thr-181 and Thr-183 each carry an O-linked (GalNAc...) threonine glycan. The segment at 181-191 is O-glycosylated at one site only in cerebrospinal fluid; sequence TNTHPPASLPS. Residues 182 to 191 show a composition bias toward polar residues; the sequence is NTHPPASLPS. Tyr-194 is subject to Phosphotyrosine. Ser-203 and Ser-218 each carry phosphoserine. Residues 229–249 show a composition bias toward acidic residues; that stretch reads EEEEEEEEAEAGEEAVPEEEG. O-linked (GalNAc...) threonine glycosylation is present at Thr-251. Basic and acidic residues-rich tracts occupy residues 263–272 and 291–303; these read KEIRKGESRS and PEGK…SQQK. Residues Ser-270 and Ser-300 each carry the phosphoserine modification. The residue at position 319 (Gly-319) is a Glycine amide. Residues Ser-322, Ser-333, and Ser-371 each carry the phosphoserine modification. Residues 330–360 show a composition bias toward basic and acidic residues; it reads ERLSKEWEDSKRWSKMDQLAKELTAEKRLEG. The residue at position 372 (Met-372) is a Methionine sulfoxide. Phosphoserine is present on residues Ser-398, Ser-402, Ser-424, and Ser-438. Basic and acidic residues predominate over residues 414-431; sequence YPEEKKEEEGSANRRPED. A glycan (O-linked (Xyl...) (chondroitin sulfate) serine) is linked at Ser-424. The residue at position 456 (Arg-456) is an Arginine amide.

Belongs to the chromogranin/secretogranin protein family. In terms of assembly, self-interacts; self-assembly is promoted in vitro by chondroitin sulfate attachment which occurs at mildly acidic pH conditions. Interacts with SCG3. Interacts with ITPR1 in the secretory granules. Post-translationally, sulfated on tyrosine residues and/or contains sulfated glycans. In terms of processing, O-glycosylated with core 1 or possibly core 8 glycans. Contains chondroitin sulfate (CS); CS attachment is pH-dependent, being observed at mildly acidic conditions of pH 5 but not at neutral pH, and promotes self-assembly in vitro. Proteolytic processing gives rise to an additional longer form of catestatin (residues 358-390) which displays a less potent catecholamine release-inhibitory activity. Plasmin-mediated proteolytic processing can give rise to additional shorter and longer forms of catestatin peptides. As to expression, detected in cerebrospinal fluid (at protein level). Detected in urine (at protein level). In terms of tissue distribution, found in the brain.

The protein localises to the secreted. It localises to the cytoplasmic vesicle. Its subcellular location is the secretory vesicle. The protein resides in the neuronal dense core vesicle. Strongly inhibits glucose induced insulin release from the pancreas. Its function is as follows. Inhibits catecholamine release from chromaffin cells and noradrenergic neurons by acting as a non-competitive nicotinic cholinergic antagonist. Displays antibacterial activity against Gram-positive bacteria S.aureus and M.luteus, and Gram-negative bacteria E.coli and P.aeruginosa. Can induce mast cell migration, degranulation and production of cytokines and chemokines. Acts as a potent scavenger of free radicals in vitro. May play a role in the regulation of cardiac function and blood pressure. Functionally, regulates granule biogenesis in endocrine cells by up-regulating the transcription of protease nexin 1 (SERPINE2) via a cAMP-PKA-SP1 pathway. This leads to inhibition of granule protein degradation in the Golgi complex which in turn promotes granule formation. This is Chromogranin-A (CHGA) from Homo sapiens (Human).